Here is a 253-residue protein sequence, read N- to C-terminus: Probable transcriptional regulatory protein AM1_1847 (253 aa).

This sequence belongs to the TACO1 family.

It localises to the cytoplasm. The protein is Probable transcriptional regulatory protein AM1_1847 of Acaryochloris marina (strain MBIC 11017).